A 313-amino-acid polypeptide reads, in one-letter code: tRNA dimethylallyltransferase (313 aa).

10–17 (GPTASGKT) contacts ATP. A substrate-binding site is contributed by 12 to 17 (TASGKT). Interaction with substrate tRNA stretches follow at residues 35–38 (DSAM), 159–163 (QRIQR), and 240–245 (RCVGYR).

It belongs to the IPP transferase family. In terms of assembly, monomer. It depends on Mg(2+) as a cofactor.

The enzyme catalyses adenosine(37) in tRNA + dimethylallyl diphosphate = N(6)-dimethylallyladenosine(37) in tRNA + diphosphate. In terms of biological role, catalyzes the transfer of a dimethylallyl group onto the adenine at position 37 in tRNAs that read codons beginning with uridine, leading to the formation of N6-(dimethylallyl)adenosine (i(6)A). The chain is tRNA dimethylallyltransferase from Legionella pneumophila (strain Lens).